The sequence spans 345 residues: Probable 3'(2'),5'-bisphosphate nucleotidase 4 (345 aa).

Residue Asp46 is the Proton acceptor of the active site. Residues Glu71, Asp134, Val136, and Asp137 each contribute to the Mg(2+) site. Thr139 (proton acceptor) is an active-site residue. Residues Thr139, Ser247, Lys250, and Arg264 each contribute to the adenosine 3',5'-bisphosphate site. 3 residues coordinate AMP: Ser247, Lys250, and Arg264.

This sequence belongs to the inositol monophosphatase superfamily. Mg(2+) serves as cofactor.

It carries out the reaction 3'-phosphoadenylyl sulfate + H2O = adenosine 5'-phosphosulfate + phosphate. It catalyses the reaction adenosine 3',5'-bisphosphate + H2O = AMP + phosphate. The catalysed reaction is adenosine 2',5'-bisphosphate + H2O = AMP + phosphate. The enzyme catalyses 1D-myo-inositol 1,4-bisphosphate + H2O = 1D-myo-inositol 4-phosphate + phosphate. It carries out the reaction 1D-myo-inositol 1,3,4-trisphosphate + H2O = 1D-myo-inositol 3,4-bisphosphate + phosphate. It functions in the pathway signal transduction; phosphatidylinositol signaling pathway. Functionally, phosphatase that converts adenosine 3'-phosphate 5'-phosphosulfate (PAPS) to adenosine 5'-phosphosulfate (APS) and 3'(2')-phosphoadenosine 5'-phosphate (PAP) to AMP. Is also able to hydrolyze inositol 1,4-bisphosphate and inositol 1,3,4-trisphosphate. The sequence is that of Probable 3'(2'),5'-bisphosphate nucleotidase 4 (SAL4) from Arabidopsis thaliana (Mouse-ear cress).